Consider the following 507-residue polypeptide: Light-independent protochlorophyllide reductase subunit B (507 aa).

D36 is a [4Fe-4S] cluster binding site. Catalysis depends on D293, which acts as the Proton donor. A substrate-binding site is contributed by 428-429 (GM).

This sequence belongs to the ChlB/BchB/BchZ family. As to quaternary structure, protochlorophyllide reductase is composed of three subunits; ChlL, ChlN and ChlB. Forms a heterotetramer of two ChlB and two ChlN subunits. The cofactor is [4Fe-4S] cluster.

Its subcellular location is the plastid. It localises to the chloroplast. The catalysed reaction is chlorophyllide a + oxidized 2[4Fe-4S]-[ferredoxin] + 2 ADP + 2 phosphate = protochlorophyllide a + reduced 2[4Fe-4S]-[ferredoxin] + 2 ATP + 2 H2O. It functions in the pathway porphyrin-containing compound metabolism; chlorophyll biosynthesis (light-independent). Its function is as follows. Component of the dark-operative protochlorophyllide reductase (DPOR) that uses Mg-ATP and reduced ferredoxin to reduce ring D of protochlorophyllide (Pchlide) to form chlorophyllide a (Chlide). This reaction is light-independent. The NB-protein (ChlN-ChlB) is the catalytic component of the complex. This Porphyra purpurea (Red seaweed) protein is Light-independent protochlorophyllide reductase subunit B.